Here is a 681-residue protein sequence, read N- to C-terminus: DNA-directed RNA polymerase subunit beta' (681 aa).

4 residues coordinate Zn(2+): Cys69, Cys71, Cys87, and Cys90. Mg(2+) contacts are provided by Asp489, Asp491, and Asp493.

It belongs to the RNA polymerase beta' chain family. RpoC1 subfamily. In terms of assembly, in plastids the minimal PEP RNA polymerase catalytic core is composed of four subunits: alpha, beta, beta', and beta''. When a (nuclear-encoded) sigma factor is associated with the core the holoenzyme is formed, which can initiate transcription. Requires Mg(2+) as cofactor. Zn(2+) serves as cofactor.

Its subcellular location is the plastid. It is found in the chloroplast. The enzyme catalyses RNA(n) + a ribonucleoside 5'-triphosphate = RNA(n+1) + diphosphate. DNA-dependent RNA polymerase catalyzes the transcription of DNA into RNA using the four ribonucleoside triphosphates as substrates. This Nicotiana sylvestris (Wood tobacco) protein is DNA-directed RNA polymerase subunit beta'.